The following is a 214-amino-acid chain: Osteoclast-stimulating factor 1 (214 aa).

Residues 12-71 enclose the SH3 domain; that stretch reads GQVKVFRALYTFEPRTPDELYFEEGDILYIADMSDTNWWKGTCKGKTGLIPSNYVAEQAE. ANK repeat units lie at residues 72-101, 105-135, and 139-168; these read SIDNPLHEAAKRGNLSWLRECLENRVGVNG, AGSTALYWGCHGGHKDVVDMLLAQPNIELNQ, and LGDTALHAAAWKGYADIVELLLVKGARTDL.

The protein resides in the cytoplasm. In terms of biological role, induces bone resorption, acting probably through a signaling cascade which results in the secretion of factor(s) enhancing osteoclast formation and activity. This chain is Osteoclast-stimulating factor 1 (ostf1), found in Xenopus laevis (African clawed frog).